A 392-amino-acid chain; its full sequence is Elongation factor Tu (392 aa).

The tr-type G domain occupies 10 to 202 (KVHVNVGTIG…VLDEYIEDPI (193 aa)). The tract at residues 19–26 (GHVDHGKT) is G1. A GTP-binding site is contributed by 19 to 26 (GHVDHGKT). Mg(2+) is bound at residue Thr26. A G2 region spans residues 60-64 (GITIN). The G3 stretch occupies residues 81 to 84 (DCPG). GTP contacts are provided by residues 81 to 85 (DCPGH) and 136 to 139 (NKCD). Positions 136–139 (NKCD) are G4. Residues 174 to 176 (SAL) are G5.

This sequence belongs to the TRAFAC class translation factor GTPase superfamily. Classic translation factor GTPase family. EF-Tu/EF-1A subfamily. As to quaternary structure, monomer.

Its subcellular location is the cytoplasm. The catalysed reaction is GTP + H2O = GDP + phosphate + H(+). Its function is as follows. GTP hydrolase that promotes the GTP-dependent binding of aminoacyl-tRNA to the A-site of ribosomes during protein biosynthesis. This chain is Elongation factor Tu, found in Phytoplasma mali (strain AT).